Here is a 564-residue protein sequence, read N- to C-terminus: Alpha-farnesene synthase (564 aa).

Residues aspartate 313, aspartate 317, threonine 464, and glutamate 468 each contribute to the Mg(2+) site. The DDXXD motif motif lies at 313-317 (DDVYD).

Belongs to the terpene synthase family. Requires Mg(2+) as cofactor.

The catalysed reaction is (2E,6E)-farnesyl diphosphate = (3E,6E)-alpha-farnesene + diphosphate. In terms of biological role, catalyzes the cyclization of farnesyl diphosphate to (E,E)-alpha-farnesene. The sequence is that of Alpha-farnesene synthase (TPS7) from Ricinus communis (Castor bean).